A 499-amino-acid polypeptide reads, in one-letter code: Glucose-6-phosphate exchanger SLC37A2 (499 aa).

Residues 21 to 40 (YRGFIIVMTFLFYTCYHMSR) traverse the membrane as a helical segment. N-linked (GlcNAc...) asparagine glycans are attached at residues asparagine 53, asparagine 62, and asparagine 66. The next 11 helical transmembrane spans lie at 86–106 (GSLDTAFLVSYAIGMFFSGIF), 116–136 (LSGGMIICGIFTSFMGLGYYW), 138–158 (IHALWYYILFQILNGLAQTTG), 187–207 (AVGNILGSLIAGAFVSTAWGL), 208–228 (SFIVPGIIIAAFGIFCFFFLV), 302–322 (LCLLFAKLVSYTFLYWLPLYI), 334–354 (GDLSTLFDVGGIIGGILAGGI), 362–382 (AITCTIMLILTAPMLFIYNYL), 391–411 (VAMLIVCGILVNGPYSLITTA), 434–454 (AIIDGSGSIGAALGPSLAGVL), and 458–478 (GWNYVFYMLIAADICACLLLV).

It belongs to the major facilitator superfamily. Organophosphate:Pi antiporter (OPA) (TC 2.A.1.4) family.

The protein localises to the endoplasmic reticulum membrane. It carries out the reaction D-glucose 6-phosphate(in) + phosphate(out) = D-glucose 6-phosphate(out) + phosphate(in). Inorganic phosphate and glucose-6-phosphate antiporter. May transport cytoplasmic glucose-6-phosphate into the lumen of the endoplasmic reticulum and translocate inorganic phosphate into the opposite direction. The chain is Glucose-6-phosphate exchanger SLC37A2 from Xenopus tropicalis (Western clawed frog).